The chain runs to 248 residues: MKKIVLLRHGESTWNKENRFTGWTDVDLTEKGVAEAAKAGEILKKEGFIFDKAYTSYLKRAVKTLNCVLDKMDLDWINVEKTWRLNEKHYGTLQGLNKAETAEKYGAEQVQLWRRSFDIAPDPIPEDDPRNPRKDIRYKNVTNADLPATESLKDTIARTMPYWTDVIMKQLKTSNQLIVVAHGNSLRGVIKHLKNISDEDIVNLNLPTAVPYVFEFDDNLNMTRDYFLGDPEEVKKLMEAVANQAKKK.

Substrate contacts are provided by residues 8-15 (RHGESTWN), 21-22 (TG), Arg-60, 87-90 (EKHY), Lys-98, 114-115 (RR), and 183-184 (GN). The Tele-phosphohistidine intermediate role is filled by His-9. Residue Glu-87 is the Proton donor/acceptor of the active site.

Belongs to the phosphoglycerate mutase family. BPG-dependent PGAM subfamily.

The enzyme catalyses (2R)-2-phosphoglycerate = (2R)-3-phosphoglycerate. It participates in carbohydrate degradation; glycolysis; pyruvate from D-glyceraldehyde 3-phosphate: step 3/5. Its function is as follows. Catalyzes the interconversion of 2-phosphoglycerate and 3-phosphoglycerate. The polypeptide is 2,3-bisphosphoglycerate-dependent phosphoglycerate mutase (Elusimicrobium minutum (strain Pei191)).